Reading from the N-terminus, the 1033-residue chain is Phospholipid-transporting ATPase neo1 (1033 aa).

Transmembrane regions (helical) follow at residues 133–153 (LKIGYLSTYIAPLIFVLLITL), 274–294 (TLWANTVLASDGVYGVVVYTG), 317–337 (INFYSKILCTFVLVLSIGLTF), and 344–364 (DWYISVFRYLILFSSIIPINL). The active-site 4-aspartylphosphate intermediate is the aspartate 408. ATP-binding residues include aspartate 408, lysine 409, threonine 410, glutamate 491, phenylalanine 528, serine 530, lysine 533, lysine 551, arginine 580, threonine 581, threonine 662, glycine 663, aspartate 664, arginine 744, and lysine 750. Aspartate 408 serves as a coordination point for Mg(2+). Threonine 410 is a Mg(2+) binding site. The next 6 membrane-spanning stretches (helical) occupy residues 768–788 (IGDGGNDVGMIQVANVGIGIV), 843–863 (VVYSVISAFEPIALFQGLLLV), 913–933 (VLISVYQGLIIQLFTFYLIGF), 939–959 (MLAVCFSCLIFNELIMVALQI), 965–985 (TIVMSELLTLMMYILSVPFLT), and 992–1012 (FLLGLKFYWVSALILFISLLP). Residue aspartate 770 coordinates Mg(2+). ATP is bound by residues asparagine 773 and aspartate 774. Position 774 (aspartate 774) interacts with Mg(2+).

The protein belongs to the cation transport ATPase (P-type) (TC 3.A.3) family. Type IV subfamily. Functions without a CDC50/LEM3 family accessory subunit. Mg(2+) serves as cofactor.

The protein localises to the endosome membrane. It localises to the golgi apparatus membrane. The enzyme catalyses ATP + H2O + phospholipidSide 1 = ADP + phosphate + phospholipidSide 2.. The catalysed reaction is a 1,2-diacyl-sn-glycero-3-phospho-L-serine(out) + ATP + H2O = a 1,2-diacyl-sn-glycero-3-phospho-L-serine(in) + ADP + phosphate + H(+). It catalyses the reaction a 1,2-diacyl-sn-glycero-3-phosphoethanolamine(out) + ATP + H2O = a 1,2-diacyl-sn-glycero-3-phosphoethanolamine(in) + ADP + phosphate + H(+). Functionally, flippase that catalyzes the hydrolysis of ATP coupled to the transport of lysophosphatidylserine, phosphatidylethanolamine, and phosphatidylserine from the lumenal to the cytosolic leaflet of the Golgi apparatus membrane and ensures the maintenance of asymmetric distribution of phospholipids. The protein is Phospholipid-transporting ATPase neo1 of Schizosaccharomyces pombe (strain 972 / ATCC 24843) (Fission yeast).